A 162-amino-acid polypeptide reads, in one-letter code: Protein FAM167B (162 aa).

The protein belongs to the FAM167 (SEC) family.

This is Protein FAM167B (Fam167b) from Mus musculus (Mouse).